Reading from the N-terminus, the 1768-residue chain is Gag-Pro-Pol polyprotein (1768 aa).

Gly-2 carries the N-myristoyl glycine; by host lipid modification. Residues 101 to 159 (AAVTQTEKILKVSSQTDLRDNSHNKDMDLISLESDDEEAKAPSEKMTMSNKSPKKYPAM) constitute a propeptide that is removed on maturation. Residues 132–152 (LESDDEEAKAPSEKMTMSNKS) are disordered. The PPXY motif signature appears at 200–203 (PPPY). Residues 215 to 251 (AVVNPKEELKEKISQLEEQIKLEELHQSLIIRLQKLK) are a coiled coil. The CCHC-type zinc finger occupies 544-561 (GGCFKCGKKGHFAKDCRD). The segment at 589–622 (KSKTDSQGNPLPPHQGNRDEGPAPGPEASLWGSQ) is disordered. The region spanning 777–853 (FTGLIDTGAD…LPVNLWGRDL (77 aa)) is the Peptidase A2 domain. Asp-782 (protease; shared with dimeric partner) is an active-site residue. The G-patch domain maps to 864–910 (PNDIVTAQMLAQGYSPGKGLGKREDGILQPIPNSGQLDRKGFGNFLA). A Reverse transcriptase domain is found at 956–1144 (LQAGHIIESN…DPYTYLGFQI (189 aa)). Residues Asp-1021, Asp-1096, Asp-1097, Asp-1367, Glu-1396, Asp-1417, and Asp-1481 each coordinate Mg(2+). The 132-residue stretch at 1358 to 1489 (LDNALLVFTD…TDLATKVVAT (132 aa)) folds into the RNase H type-1 domain. An Integrase-type zinc finger spans residues 1493–1534 (TNLTEAQTAHALHHLNAQSLRLMFKITREQARQIVKQCPTCV). The Zn(2+) site is built by His-1502, His-1506, Cys-1530, and Cys-1533. An Integrase catalytic domain is found at 1547–1708 (KGLVPNMLWQ…AADRFWHTSS (162 aa)). Mg(2+)-binding residues include Asp-1558, Asp-1615, and Glu-1651. The segment at residues 1713 to 1762 (AMVKWKDPLDNTWHGPDPVLIWGRGSVCVYSQTHDAARWLPERLVRQVSN) is a DNA-binding region (integrase-type).

This sequence belongs to the retroviral Pol polyprotein family. As to quaternary structure, homodimer. In terms of assembly, interacts with the G-patch peptide. Interacts with the reverse transcriptase/ribonuclease H. As to quaternary structure, homotrimer. Mg(2+) is required as a cofactor. Released by autocatalytic processing. The protease can undergo further autoprocessing to yield 2 shorter but enzymatically active forms of 12 kDa and 13 kDa. Post-translationally, myristoylated. Myristoylation of the matrix (MA) domain mediates the transport and binding of Gag polyproteins to the host plasma membrane and is required for the assembly of viral particles. In terms of processing, specific enzymatic cleavages in vivo yield mature proteins.

It localises to the virion. It catalyses the reaction DNA(n) + a 2'-deoxyribonucleoside 5'-triphosphate = DNA(n+1) + diphosphate. It carries out the reaction Endonucleolytic cleavage to 5'-phosphomonoester.. The enzyme catalyses dUTP + H2O = dUMP + diphosphate + H(+). Functionally, matrix protein. In terms of biological role, nucleocapsid protein p14: Nucleocapsid protein. Capsid protein. Its function is as follows. The aspartyl protease mediates proteolytic cleavages of Gag and Gag-Pol polyproteins during or shortly after the release of the virion from the plasma membrane. Cleavages take place as an ordered, step-wise cascade to yield mature proteins. This process is called maturation. Displays maximal activity during the budding process just prior to particle release from the cell. Functionally, enhances the activity of the reverse transcriptase. May be part of the mature RT. In terms of biological role, RT is a multifunctional enzyme that converts the viral dimeric RNA genome into dsDNA in the cytoplasm, shortly after virus entry into the cell. This enzyme displays a DNA polymerase activity that can copy either DNA or RNA templates, and a ribonuclease H (RNase H) activity that cleaves the RNA strand of RNA-DNA heteroduplexes in a partially processive 3' to 5' endonucleasic mode. Conversion of viral genomic RNA into dsDNA requires many steps. A tRNA binds to the primer-binding site (PBS) situated at the 5' end of the viral RNA. RT uses the 3' end of the tRNA primer to perfom a short round of RNA-dependent minus-strand DNA synthesis. The reading proceeds through the U5 region and ends after the repeated (R) region which is present at both ends of viral RNA. The portion of the RNA-DNA heteroduplex is digested by the RNase H, resulting in a ssDNA product attached to the tRNA primer. This ssDNA/tRNA hybridizes with the identical R region situated at the 3' end of viral RNA. This template exchange, known as minus-strand DNA strong stop transfer, can be either intra- or intermolecular. RT uses the 3' end of this newly synthesized short ssDNA to perfom the RNA-dependent minus-strand DNA synthesis of the whole template. RNase H digests the RNA template except for a polypurine tract (PPT) situated at the 5' end of the genome. It is not clear if both polymerase and RNase H activities are simultaneous. RNase H probably can proceed both in a polymerase-dependent (RNA cut into small fragments by the same RT performing DNA synthesis) and a polymerase-independent mode (cleavage of remaining RNA fragments by free RTs). Secondly, RT performs DNA-directed plus-strand DNA synthesis using the PPT that has not been removed by RNase H as primers. PPT and tRNA primers are then removed by RNase H. The 3' and 5' ssDNA PBS regions hybridize to form a circular dsDNA intermediate. Strand displacement synthesis by RT to the PBS and PPT ends produces a blunt ended, linear dsDNA copy of the viral genome that includes long terminal repeats (LTRs) at both ends. Catalyzes viral DNA integration into the host chromosome, by performing a series of DNA cutting and joining reactions. This is Gag-Pro-Pol polyprotein (pol) from Macaca mulatta (Rhesus macaque).